We begin with the raw amino-acid sequence, 308 residues long: D-alanine--D-alanine ligase B (308 aa).

The ATP-grasp domain maps to Lys102–Glu302. Pro128–Thr183 lines the ATP pocket. Mg(2+) contacts are provided by Asp252, Glu269, and Asn271.

This sequence belongs to the D-alanine--D-alanine ligase family. It depends on Mg(2+) as a cofactor. The cofactor is Mn(2+).

It is found in the cytoplasm. It catalyses the reaction 2 D-alanine + ATP = D-alanyl-D-alanine + ADP + phosphate + H(+). Its pathway is cell wall biogenesis; peptidoglycan biosynthesis. Cell wall formation. The sequence is that of D-alanine--D-alanine ligase B from Mesorhizobium japonicum (strain LMG 29417 / CECT 9101 / MAFF 303099) (Mesorhizobium loti (strain MAFF 303099)).